The sequence spans 392 residues: Multidrug resistance protein MdtL (392 aa).

The next 12 helical transmembrane spans lie at 4–24 (FLLC…MYLV), 38–58 (AQLH…MLFA), 69–89 (PVAI…AQVH), 95–115 (LIGR…AFAI), 131–151 (LLNG…HLIM), 158–178 (SLFY…VFIL), 209–229 (LLIT…SPVL), 246–266 (ALMA…LSLF), 270–290 (TLML…SLAT), 294–314 (VTLI…GVAM), 331–351 (VLGI…AIIG), and 357–377 (MLIG…LVVT).

The protein belongs to the major facilitator superfamily. DHA1 family. MdtL (TC 2.A.1.2.22) subfamily.

The protein localises to the cell inner membrane. This is Multidrug resistance protein MdtL from Klebsiella pneumoniae subsp. pneumoniae (strain ATCC 700721 / MGH 78578).